Here is a 134-residue protein sequence, read N- to C-terminus: MDLRTGEVITAPQAMNGVYTWEINNPLYFTITRHQQRPFLLNQDIITVQVRFNHNLRKELGIHKCFLNFQIWTTLQPQTGLFLRVFRYQVIKYLDNIGVISINNVIRAADHVLFNVIANTIECKLTHEIKFNVY.

It belongs to the geminiviridae replication enhancer protein family. As to quaternary structure, homooligomer. Interacts with the replication-associated protein (REP). Interacts with host proliferating cell nuclear antigen (PCNA). Interacts with host retinoblastoma-related protein 1 (RBR1), and may thereby deregulate the host cell cycle. Oligomerization and interaction with PCNA are necessary for optimal replication enhancement.

Functionally, increases viral DNA accumulation. Enhances infectivity and symptom expression. This chain is Replication enhancer protein, found in African cassava mosaic virus (isolate West Kenyan 844) (ACMV).